We begin with the raw amino-acid sequence, 347 residues long: N-acetyl-gamma-glutamyl-phosphate reductase (347 aa).

The active site involves Cys151.

The protein belongs to the NAGSA dehydrogenase family. Type 1 subfamily.

It is found in the cytoplasm. The catalysed reaction is N-acetyl-L-glutamate 5-semialdehyde + phosphate + NADP(+) = N-acetyl-L-glutamyl 5-phosphate + NADPH + H(+). It participates in amino-acid biosynthesis; L-arginine biosynthesis; N(2)-acetyl-L-ornithine from L-glutamate: step 3/4. In terms of biological role, catalyzes the NADPH-dependent reduction of N-acetyl-5-glutamyl phosphate to yield N-acetyl-L-glutamate 5-semialdehyde. This chain is N-acetyl-gamma-glutamyl-phosphate reductase, found in Corynebacterium diphtheriae (strain ATCC 700971 / NCTC 13129 / Biotype gravis).